A 241-amino-acid chain; its full sequence is MKVLALSALLSLASAASISRRSDFCGQWDTATAGDFILYNDLWGEDNASSGSQCTGVDSASGNEIAWHTSWSWEGGSSDVKSYANAALQFTGTQLSSISSIPSTWKWTYSGSDIVADVAYDMFLGSTADASSDEYEIMVWLAALGGAGPISSTGSTIATPTINGVTWDLYTGPNGDTTVYSFVAQSTTEDFSGDLNDFFTYLVDNEGVSDSLYLTTLEAGTEPFTGSDAELKVSEYSVSIE.

Positions 1-15 (MKVLALSALLSLASA) are cleaved as a signal peptide. Asn47 carries an N-linked (GlcNAc...) asparagine glycan.

Belongs to the glycosyl hydrolase 12 (cellulase H) family.

It is found in the secreted. It carries out the reaction xyloglucan + H2O = xyloglucan oligosaccharides.. In terms of biological role, catalyzes endohydrolysis of 1,4-beta-D-glucosidic linkages in xyloglucan with retention of the beta-configuration of the glycosyl residues. Specific for xyloglucan and does not hydrolyze other cell wall components. The sequence is that of Probable xyloglucan-specific endo-beta-1,4-glucanase A (xgeA) from Aspergillus niger (strain ATCC MYA-4892 / CBS 513.88 / FGSC A1513).